The chain runs to 192 residues: Orotate phosphoribosyltransferase (192 aa).

5-phospho-alpha-D-ribose 1-diphosphate is bound at residue 116–124 (EDIVTTGLS). The orotate site is built by threonine 120 and arginine 148.

This sequence belongs to the purine/pyrimidine phosphoribosyltransferase family. PyrE subfamily. In terms of assembly, homodimer. Requires Mg(2+) as cofactor.

The catalysed reaction is orotidine 5'-phosphate + diphosphate = orotate + 5-phospho-alpha-D-ribose 1-diphosphate. It functions in the pathway pyrimidine metabolism; UMP biosynthesis via de novo pathway; UMP from orotate: step 1/2. Its function is as follows. Catalyzes the transfer of a ribosyl phosphate group from 5-phosphoribose 1-diphosphate to orotate, leading to the formation of orotidine monophosphate (OMP). The sequence is that of Orotate phosphoribosyltransferase from Brucella anthropi (strain ATCC 49188 / DSM 6882 / CCUG 24695 / JCM 21032 / LMG 3331 / NBRC 15819 / NCTC 12168 / Alc 37) (Ochrobactrum anthropi).